A 683-amino-acid polypeptide reads, in one-letter code: WD repeat-containing protein 48 homolog (683 aa).

WD repeat units follow at residues 27-82 (SNRS…PVQY), 88-130 (QHTD…FIDC), 133-167 (THKD…INAN), 176-215 (GCKD…KIMK), 218-257 (GHTD…CIAT), 260-299 (AHEE…KSQL), and 302-343 (KEEA…QLSI). Residues 341-364 (LSIGGDEDGPSTSNANHSVSASSS) form a disordered region. Low complexity predominate over residues 351-364 (STSNANHSVSASSS). One copy of the WD 8 repeat lies at 389-428 (PGAPAIKKHAMLSDKRHVLTRDSDGNVALYDVLAARKIKD).

The protein belongs to the WD repeat WDR48 family. As to quaternary structure, interacts with usp-46; the interaction increases the catalytic activity of usp-46 in the presence of wdr-20. As to expression, expressed in several head neurons and cells in the tail including the anal depressor cell.

Its function is as follows. Together with wdr-20, binds to and stimulates the activity of the deubiquitinating enzyme usp-46, leading to deubiquitination and stabilization of the glr-1 glutamate receptor. The polypeptide is WD repeat-containing protein 48 homolog (wdr-48) (Caenorhabditis elegans).